Here is a 383-residue protein sequence, read N- to C-terminus: Histidine decarboxylase (383 aa).

Histidine 120 lines the substrate pocket. Lysine 233 is modified (N6-(pyridoxal phosphate)lysine).

This sequence belongs to the group II decarboxylase family. In terms of assembly, homotetramer. Pyridoxal 5'-phosphate serves as cofactor.

It catalyses the reaction L-histidine + H(+) = histamine + CO2. This is Histidine decarboxylase from Acinetobacter baumannii (strain AB307-0294).